The chain runs to 98 residues: Phosphoribosyl-ATP pyrophosphatase (98 aa).

Belongs to the PRA-PH family.

It is found in the cytoplasm. The enzyme catalyses 1-(5-phospho-beta-D-ribosyl)-ATP + H2O = 1-(5-phospho-beta-D-ribosyl)-5'-AMP + diphosphate + H(+). It participates in amino-acid biosynthesis; L-histidine biosynthesis; L-histidine from 5-phospho-alpha-D-ribose 1-diphosphate: step 2/9. This is Phosphoribosyl-ATP pyrophosphatase from Haloarcula marismortui (strain ATCC 43049 / DSM 3752 / JCM 8966 / VKM B-1809) (Halobacterium marismortui).